Consider the following 140-residue polypeptide: Protein NrdI (140 aa).

It belongs to the NrdI family.

Probably involved in ribonucleotide reductase function. This chain is Protein NrdI, found in Photorhabdus laumondii subsp. laumondii (strain DSM 15139 / CIP 105565 / TT01) (Photorhabdus luminescens subsp. laumondii).